Here is a 224-residue protein sequence, read N- to C-terminus: Probable mitochondrial import inner membrane translocase subunit Tim17 4 (224 aa).

A run of 3 helical transmembrane segments spans residues 16 to 36 (CGCA…LKGF), 60 to 80 (AIAG…CVMV), and 115 to 135 (AFVG…VATI).

Belongs to the Tim17/Tim22/Tim23 family. As to quaternary structure, component of the TIM23 complex at least composed of Tim23, Tim17 (Tim17a1, Tim17a2 or Tim17b1) and a Tim50. The complex interacts with the Tim44 component of the PAM complex.

The protein resides in the mitochondrion inner membrane. Functionally, essential component of the TIM23 complex, a complex that mediates the translocation of transit peptide-containing proteins across the mitochondrial inner membrane. The chain is Probable mitochondrial import inner membrane translocase subunit Tim17 4 (Tim17a2) from Drosophila melanogaster (Fruit fly).